A 313-amino-acid polypeptide reads, in one-letter code: Porphobilinogen deaminase 2 (313 aa).

S-(dipyrrolylmethanemethyl)cysteine is present on C246.

It belongs to the HMBS family. As to quaternary structure, monomer. Requires dipyrromethane as cofactor.

The catalysed reaction is 4 porphobilinogen + H2O = hydroxymethylbilane + 4 NH4(+). The protein operates within porphyrin-containing compound metabolism; protoporphyrin-IX biosynthesis; coproporphyrinogen-III from 5-aminolevulinate: step 2/4. Its function is as follows. Tetrapolymerization of the monopyrrole PBG into the hydroxymethylbilane pre-uroporphyrinogen in several discrete steps. The sequence is that of Porphobilinogen deaminase 2 (hemC2) from Streptomyces coelicolor (strain ATCC BAA-471 / A3(2) / M145).